A 416-amino-acid polypeptide reads, in one-letter code: Glutamate dehydrogenase (416 aa).

Lys105 is a catalytic residue.

It belongs to the Glu/Leu/Phe/Val dehydrogenases family. Homohexamer.

The catalysed reaction is L-glutamate + NAD(+) + H2O = 2-oxoglutarate + NH4(+) + NADH + H(+). The enzyme catalyses L-glutamate + NADP(+) + H2O = 2-oxoglutarate + NH4(+) + NADPH + H(+). The sequence is that of Glutamate dehydrogenase (gdhA) from Thermotoga maritima (strain ATCC 43589 / DSM 3109 / JCM 10099 / NBRC 100826 / MSB8).